We begin with the raw amino-acid sequence, 364 residues long: Probable cysteine protease RDL4 (364 aa).

A signal peptide spans 1-23 (MGSAKSAMLILLVAMVIASCATA). A propeptide spans 24–136 (IDMSVVSYDD…DRYKTSADDV (113 aa)) (activation peptide). Asparagine 87 is a glycosylation site (N-linked (GlcNAc...) asparagine). Cystine bridges form between cysteine 158–cysteine 199, cysteine 192–cysteine 232, and cysteine 291–cysteine 342. Cysteine 161 is an active-site residue. Catalysis depends on residues histidine 297 and asparagine 317.

Belongs to the peptidase C1 family. In terms of tissue distribution, expressed in inflorescences.

Functionally, probable thiol protease. This Arabidopsis thaliana (Mouse-ear cress) protein is Probable cysteine protease RDL4.